The chain runs to 1034 residues: Sodium bicarbonate cotransporter 3 (1034 aa).

Disordered stretches follow at residues 1–31 (MEAD…KTSS) and 53–99 (HVPF…SQRV). Residues 1–476 (MEADGAGEQM…DFKDALSLQC (476 aa)) are Extracellular-facing. 4 positions are modified to phosphoserine: S57, S60, S89, and S155. A compositionally biased stretch (basic residues) spans 60-77 (SRRRHKHRGHKHHHRRRK). A compositionally biased stretch (basic and acidic residues) spans 78-90 (DKDSDKEDGRESP). N-linked (GlcNAc...) asparagine glycosylation is present at N176. 6 positions are modified to phosphoserine: S238, S250, S260, M263, S268, and S271. Over residues 250–260 (SAPGNLDNSKS) the composition is skewed to polar residues. Positions 250 to 276 (SAPGNLDNSKSGEMKGNGSGGSRENST) are disordered. N274 carries N-linked (GlcNAc...) asparagine glycosylation. Residues S275 and S424 each carry the phosphoserine modification. The chain crosses the membrane as a helical span at residues 477–497 (LASILFLYCACMSPVITFGGL). The Cytoplasmic segment spans residues 498-505 (LGEATEGR). Residues 506–526 (ISAIESLFGASLTGIAYSLFA) form a helical membrane-spanning segment. At 527-563 (GQPLTILGSTGPVLVFEKILFKFCRDYHLSYLSLRTS) the chain is on the extracellular side. Residues 564–584 (IGLWTSFLCIVLVATDASSLV) traverse the membrane as a helical segment. Residues 585 to 593 (CYITRFTEE) lie on the Cytoplasmic side of the membrane. Residues 594-614 (AFAALICIIFIYEALEKLFHL) traverse the membrane as a helical segment. Residues 615 to 685 (GEIYAFNMHN…MFVGSACGPH (71 aa)) are Extracellular-facing. C634 and C636 are oxidised to a cystine. N-linked (GlcNAc...) asparagine glycosylation is found at N644, N654, and N664. C670 and C682 are oxidised to a cystine. Residues 686 to 706 (GPYVPDVLFWCVVLFFTTFFL) traverse the membrane as a helical segment. The Cytoplasmic segment spans residues 707 to 729 (SSFLKQFKTKGYFPTKVRSTISD). The chain crosses the membrane as a helical span at residues 730 to 750 (FAVFLTIVIMVAIDYLVGIPS). At 751–776 (PKLHVPEKFEPTDPSRGWIISPLGDN) the chain is on the extracellular side. The chain crosses the membrane as a helical span at residues 777-797 (PWWTLLIAAVPALLCTILIFM). Residues 798–812 (DQQITAVIINRKEHK) are Cytoplasmic-facing. The helical transmembrane segment at 813–833 (LKFIPMPVLYGVFLYMGVSSL) threads the bilayer. The tract at residues 815–915 (FIPMPVLYGV…MDLCFTKREL (101 aa)) is essential for cell membrane localization and transport activity. Residues 834–876 (KGIQFFDRIKLFGMPAKHQPDLIYLRYVPLWKVHVFTVVQLTC) lie on the Extracellular side of the membrane. A helical transmembrane segment spans residues 877–897 (LVLLWVIKASAAAVVFPMMVL). Residues 898-1034 (ALVFVRKLMD…KKYMDAETSL (137 aa)) lie on the Cytoplasmic side of the membrane. The tract at residues 918-920 (LDD) is CA2-binding. The tract at residues 926–946 (KKKKEDDKKKKEKEEAERMLQ) is disordered. At T951 the chain carries Phosphothreonine. Phosphoserine is present on residues S960 and S1033. A PDZ-binding motif is present at residues 1031–1034 (ETSL).

Belongs to the anion exchanger (TC 2.A.31) family. As to quaternary structure, forms a complex with ATP6V1B1 and NHERF1/EBP50. Interacts in a pH dependent-manner with CA2/carbonic anhydrase 2. Interacts with CFTR through NHERF1/EBP50. Interacts with USH1C. In terms of tissue distribution, expressed in the spiral ligament throughout the cochlea and in photoreceptors of the outer plexiform layer of the retina (at protein level).

Its subcellular location is the basolateral cell membrane. The protein resides in the apical cell membrane. It localises to the cell projection. The protein localises to the stereocilium. It is found in the cell membrane. The catalysed reaction is hydrogencarbonate(in) + Na(+)(in) = hydrogencarbonate(out) + Na(+)(out). With respect to regulation, activity is inhibited by 4,4'-di-isothiocyanatostilbene-2,2'-disulfonic acid (DIDS - an inhibitor of several anion channels and transporters). Electroneutral sodium- and bicarbonate-dependent cotransporter with a Na(+):HCO3(-) 1:1 stoichiometry. Mediates the sodium-dependent bicarbonate transport important for pH recovery after acid load as well as for regulation of steady-state pH in the duodenum and vascular smooth muscle cells. Plays a key role in macrophage acidification, mediating bicarbonate import into the cytoplasm which is crucial for net acid extrusion and maintenance of cytoplasmic pH during phagocytosis. Provides cellular bicarbonate for de novo purine and pyrimidine synthesis and is a key mediator of de novo nucleotide synthesis downstream of mTORC1 signaling in proliferating cells. May be involved in maintaining locomotor activity, exploratory behavior, and hearing. The sequence is that of Sodium bicarbonate cotransporter 3 (Slc4a7) from Mus musculus (Mouse).